We begin with the raw amino-acid sequence, 314 residues long: Tetraacyldisaccharide 4'-kinase (314 aa).

Position 54-61 (54-61 (YIGGTGKT)) interacts with ATP.

This sequence belongs to the LpxK family.

It carries out the reaction a lipid A disaccharide + ATP = a lipid IVA + ADP + H(+). The protein operates within glycolipid biosynthesis; lipid IV(A) biosynthesis; lipid IV(A) from (3R)-3-hydroxytetradecanoyl-[acyl-carrier-protein] and UDP-N-acetyl-alpha-D-glucosamine: step 6/6. Functionally, transfers the gamma-phosphate of ATP to the 4'-position of a tetraacyldisaccharide 1-phosphate intermediate (termed DS-1-P) to form tetraacyldisaccharide 1,4'-bis-phosphate (lipid IVA). In Pelagibacter ubique (strain HTCC1062), this protein is Tetraacyldisaccharide 4'-kinase.